We begin with the raw amino-acid sequence, 90 residues long: Protein LURE 1.4 (90 aa).

The signal sequence occupies residues 1–19; sequence MKCPSIFLTLLIFVSSCTS. Residue Asn-23 is glycosylated (N-linked (GlcNAc...) asparagine). 3 cysteine pairs are disulfide-bonded: Cys-58–Cys-75, Cys-61–Cys-82, and Cys-65–Cys-84. A PRK6 binding region spans residues 67 to 87; the sequence is RRGKYIRTCSFERKLCRCSIS.

It belongs to the DEFL family. Binds to PRK6 LRRs. In terms of tissue distribution, expressed in the pistil. Detected exclusively in the synergid cells.

The protein localises to the secreted. In terms of biological role, pollen tube attractants guiding pollen tubes to the ovular micropyle. This Arabidopsis thaliana (Mouse-ear cress) protein is Protein LURE 1.4.